Reading from the N-terminus, the 633-residue chain is Bifunctional enzyme CysN/CysC (633 aa).

The tract at residues 1 to 463 is sulfate adenylyltransferase; that stretch reads MSHQSDLISE…REERAGRFGQ (463 aa). Positions 22–241 constitute a tr-type G domain; that stretch reads KELLRFLTCG…TVEIAADRNL (220 aa). The G1 stretch occupies residues 31–38; it reads GNVDDGKS. A GTP-binding site is contributed by 31-38; sequence GNVDDGKS. Positions 89–93 are G2; sequence GITID. The tract at residues 110–113 is G3; the sequence is DTPG. Residues 110-114 and 165-168 each bind GTP; these read DTPGH and NKMD. A G4 region spans residues 165 to 168; sequence NKMD. The interval 204–206 is G5; the sequence is SAL. The segment at 464–633 is adenylyl-sulfate kinase; sequence QPATVLFSGL…LDLLRERQAI (170 aa). An ATP-binding site is contributed by 472–479; that stretch reads GLSGAGKS.

This sequence in the C-terminal section; belongs to the APS kinase family. In the N-terminal section; belongs to the TRAFAC class translation factor GTPase superfamily. Classic translation factor GTPase family. CysN/NodQ subfamily. Heterodimer composed of CysD, the smaller subunit, and CysNC.

It catalyses the reaction sulfate + ATP + H(+) = adenosine 5'-phosphosulfate + diphosphate. It carries out the reaction adenosine 5'-phosphosulfate + ATP = 3'-phosphoadenylyl sulfate + ADP + H(+). The protein operates within sulfur metabolism; hydrogen sulfide biosynthesis; sulfite from sulfate: step 1/3. Its pathway is sulfur metabolism; hydrogen sulfide biosynthesis; sulfite from sulfate: step 2/3. Functionally, with CysD forms the ATP sulfurylase (ATPS) that catalyzes the adenylation of sulfate producing adenosine 5'-phosphosulfate (APS) and diphosphate, the first enzymatic step in sulfur assimilation pathway. APS synthesis involves the formation of a high-energy phosphoric-sulfuric acid anhydride bond driven by GTP hydrolysis by CysN coupled to ATP hydrolysis by CysD. In terms of biological role, APS kinase catalyzes the synthesis of activated sulfate. The protein is Bifunctional enzyme CysN/CysC (cysNC) of Pseudomonas aeruginosa (strain ATCC 15692 / DSM 22644 / CIP 104116 / JCM 14847 / LMG 12228 / 1C / PRS 101 / PAO1).